Here is a 278-residue protein sequence, read N- to C-terminus: DegV domain-containing protein YejH (278 aa).

In terms of domain architecture, DegV spans 3–277; it reads IKIVTDSSIT…PGAWAIMIDY (275 aa). Residues threonine 60 and serine 92 each coordinate hexadecanoate.

Functionally, may bind long-chain fatty acids, such as palmitate, and may play a role in lipid transport or fatty acid metabolism. The chain is DegV domain-containing protein YejH (yejH) from Lactococcus lactis subsp. lactis (strain IL1403) (Streptococcus lactis).